Reading from the N-terminus, the 185-residue chain is Threonylcarbamoyl-AMP synthase (185 aa).

One can recognise a YrdC-like domain in the interval 4 to 185; that stretch reads SWRVQQAARE…LATGEIVRPG (182 aa).

It belongs to the SUA5 family. TsaC subfamily.

The protein resides in the cytoplasm. The catalysed reaction is L-threonine + hydrogencarbonate + ATP = L-threonylcarbamoyladenylate + diphosphate + H2O. In terms of biological role, required for the formation of a threonylcarbamoyl group on adenosine at position 37 (t(6)A37) in tRNAs that read codons beginning with adenine. Catalyzes the conversion of L-threonine, HCO(3)(-)/CO(2) and ATP to give threonylcarbamoyl-AMP (TC-AMP) as the acyladenylate intermediate, with the release of diphosphate. In Pseudomonas putida (strain W619), this protein is Threonylcarbamoyl-AMP synthase.